The following is a 255-amino-acid chain: 1-(5-phosphoribosyl)-5-[(5-phosphoribosylamino)methylideneamino] imidazole-4-carboxamide isomerase (255 aa).

The active-site Proton acceptor is the aspartate 8. The active-site Proton donor is aspartate 129.

Belongs to the HisA/HisF family.

The protein resides in the cytoplasm. The enzyme catalyses 1-(5-phospho-beta-D-ribosyl)-5-[(5-phospho-beta-D-ribosylamino)methylideneamino]imidazole-4-carboxamide = 5-[(5-phospho-1-deoxy-D-ribulos-1-ylimino)methylamino]-1-(5-phospho-beta-D-ribosyl)imidazole-4-carboxamide. Its pathway is amino-acid biosynthesis; L-histidine biosynthesis; L-histidine from 5-phospho-alpha-D-ribose 1-diphosphate: step 4/9. The polypeptide is 1-(5-phosphoribosyl)-5-[(5-phosphoribosylamino)methylideneamino] imidazole-4-carboxamide isomerase (Prochlorococcus marinus subsp. pastoris (strain CCMP1986 / NIES-2087 / MED4)).